Here is a 688-residue protein sequence, read N- to C-terminus: Amino-acid acetyltransferase, mitochondrial (688 aa).

The transit peptide at 1–45 directs the protein to the mitochondrion; that stretch reads MSSRALTWPRTAKSSLLKQQTSSFVGQPKLGTPNCRSFSSTADRP. Disordered regions lie at residues 1-59 and 96-119; these read MSSR…SKSY and LKAQ…TVTQ. Polar residues-rich tracts occupy residues 12-25, 34-57, and 106-119; these read AKSS…SSFV, NCRS…SSSK, and TEPT…TVTQ. The N-acetyltransferase domain maps to 509–678; the sequence is NRPRLSLDDP…YEQVCRSIQP (170 aa).

Belongs to the acetyltransferase family.

The protein localises to the mitochondrion. The enzyme catalyses L-glutamate + acetyl-CoA = N-acetyl-L-glutamate + CoA + H(+). It functions in the pathway amino-acid biosynthesis; L-arginine biosynthesis; N(2)-acetyl-L-ornithine from L-glutamate: step 1/4. N-acetylglutamate synthase involved in arginine biosynthesis. This is Amino-acid acetyltransferase, mitochondrial (arg2) from Aspergillus flavus (strain ATCC 200026 / FGSC A1120 / IAM 13836 / NRRL 3357 / JCM 12722 / SRRC 167).